Reading from the N-terminus, the 352-residue chain is Zinc transporter 1 (352 aa).

The first 29 residues, 1 to 29 (MARTMTMRVSSLLVAVVLLAALSFQACSG), serve as a signal peptide directing secretion. The Extracellular segment spans residues 30–56 (HGGINDGDGQVDAPATPASSSGVRSKG). Residues 57-77 (LIAVKVWCLVILLVFTFAGGV) form a helical membrane-spanning segment. Residues 78-87 (SPYFYRWNES) are Cytoplasmic-facing. Residues 88–108 (FLLLGTQFAAGVFLGTALMHF) form a helical membrane-spanning segment. The Extracellular portion of the chain corresponds to 109–127 (LADSTSTFKGLTTNQYPFS). Residues 128–148 (FMLTCVGFLLTMLSDLVIAAV) traverse the membrane as a helical segment. The Cytoplasmic portion of the chain corresponds to 149 to 200 (ARRSAAAGVSDNQVSEQQQRQQAEGAVMSRKEEEAAAVAHPAMLVRTSSFED). The chain crosses the membrane as a helical span at residues 201-221 (AVLLIVALCFHSVFEGIAIGV). The Extracellular portion of the chain corresponds to 222 to 230 (SASKSEAWR). Residues 231-251 (NLWTIGLHKIFAAVAMGIALL) traverse the membrane as a helical segment. Topologically, residues 252 to 262 (RMIPKRPFLMT) are cytoplasmic. The helical transmembrane segment at 263-283 (VVYSLAFAVSSPVGVGIGIAI) threads the bilayer. Residues 284–296 (DATSQGRAADWTY) are Extracellular-facing. The chain crosses the membrane as a helical span at residues 297–317 (AISMGLATGVFIYVAINHLIA). Topologically, residues 318 to 330 (KGYRPHHPTAADK) are cytoplasmic. Residues 331–351 (PLFKFLAVLLGVAVMAVVMIW) form a helical membrane-spanning segment. Residue Asp352 is a topological domain, extracellular.

Belongs to the ZIP transporter (TC 2.A.5) family. As to expression, expressed in vascular bundles of roots and leaves.

It is found in the cell membrane. Its function is as follows. Zinc transporter that may mediate zinc uptake from the rhizosphere. May also transport other divalent cations. In Oryza sativa subsp. japonica (Rice), this protein is Zinc transporter 1 (ZIP1).